The following is a 507-amino-acid chain: Cytochrome P450 monooxygenase helB3 (507 aa).

The N-terminal stretch at 1 to 25 (MAVATLISILFAVLALRLCYLLIHA) is a signal peptide. Asn111, Asn206, and Asn339 each carry an N-linked (GlcNAc...) asparagine glycan. Cys435 lines the heme pocket.

The protein belongs to the cytochrome P450 family. Heme serves as cofactor.

The protein operates within mycotoxin biosynthesis. In terms of biological role, cytochrome P450 monooxygenase; part of the gene cluster that mediates the biosynthesis of helvolic acid, an antibacterial nortriterpenoid. Protostadienol synthase helA cyclizes (3S)-oxidosqualene to (17Z)-protosta-17(20),24-dien-3-beta-ol (protostadienol). The synthesis of protostadienol is followed by several steps of monooxygenation, dehydrogenation, and acyl transfer to yield the final helvolic acid. Following the cyclization to the tetracyclic protostadienol by helA, cytochrome P450 monooxygenases helB1-mediated and helB2-mediated oxidation at C-4 and C-16, acyltransferase helD2-dependent acetylation of 16-OH, oxidation of C-21 by cytochrome P450 monooxygenase helB4, and short chain dehydrogenase helC-dependent oxidative decarboxylation yield the fusidane skeleton. This intermediate is further modified in three additional steps mediated by the cytochrome P450 monooxygenase helB3, the acyltransferase helD1, and the 3-ketosteroid 1-dehydrogenase helE to give helvolic acid. Compared with the late stages in the biosynthesis of helvolic acid, enzymes involved in the early stage modifications act in a relatively strict order. The hydroxylation of C-16 by helB1 and subsequent acetylation by helD2 should occur before the helB3-mediated oxidation of C-21. C-4 demethylation in fusidane-type antibiotics proceeds in an unusual manner though it is also achieved by oxidative decarboxylation. The methyl group at C-4 beta position is oxidized by helB1 and subsequently removed by the short chain dehydrogenase helC. The polypeptide is Cytochrome P450 monooxygenase helB3 (Aspergillus fumigatus (strain ATCC MYA-4609 / CBS 101355 / FGSC A1100 / Af293) (Neosartorya fumigata)).